Here is a 319-residue protein sequence, read N- to C-terminus: Cobalamin biosynthesis protein CobD (319 aa).

Helical transmembrane passes span 54–76 (VLLLLTVLLIVTALSLALVWLSY), 154–173 (GVTAPLFYALIGGAPLALLY), and 301–318 (VLGFLVFLFLLGGFIYAI).

The protein belongs to the CobD/CbiB family.

Its subcellular location is the cell membrane. Its pathway is cofactor biosynthesis; adenosylcobalamin biosynthesis. Functionally, converts cobyric acid to cobinamide by the addition of aminopropanol on the F carboxylic group. The protein is Cobalamin biosynthesis protein CobD of Halalkalibacterium halodurans (strain ATCC BAA-125 / DSM 18197 / FERM 7344 / JCM 9153 / C-125) (Bacillus halodurans).